A 311-amino-acid chain; its full sequence is Heme A synthase (311 aa).

The Cytoplasmic portion of the chain corresponds to 1–6 (MQRFIK). Residues 7 to 27 (WLAVITSLDLLIVLLGGALVT) traverse the membrane as a helical segment. At 28–62 (KTGSGQGCGKSWPLCNGEFVPSNLSMETIIELSHR) the chain is on the extracellular side. A disulfide bridge links Cys-35 with Cys-42. Residue Glu-58 is part of the active site. His-61 lines the heme o pocket. The helical transmembrane segment at 63-83 (LTSGSAGILVTLLCILSWKYY) threads the bilayer. The Cytoplasmic portion of the chain corresponds to 84-91 (KHVRETKT). Residues 92 to 112 (LAILSFVFLVAQALMGAAAVV) form a helical membrane-spanning segment. Over 113–121 (WGQMPAVLA) the chain is Extracellular. Residues 122 to 142 (IHFGISLISFASVILLTCLIF) traverse the membrane as a helical segment. His-123 is a binding site for heme o. The Cytoplasmic portion of the chain corresponds to 143–159 (EIDQKFDARSLIMDKKM). Residues 160–180 (KFHIYGVTIYSYIVVYTGALV) form a helical membrane-spanning segment. Residues 181 to 211 (RHERASLACPDFPLCSKNRPMPTQLHEWVQM) are Extracellular-facing. Residues Cys-189 and Cys-195 are joined by a disulfide bond. The chain crosses the membrane as a helical span at residues 212 to 232 (GHRVAAMLIFAWILYAMILAI). Position 213 (His-213) interacts with heme b. Over 233–243 (RHYKQQPVVYW) the chain is Cytoplasmic. Residues 244-264 (GWIISFILVTLQAVVGVLVVF) traverse the membrane as a helical segment. The Extracellular portion of the chain corresponds to 265–271 (TNASLAM). Residues 272 to 292 (ALLHSLFISCLFAVLCYLVML) traverse the membrane as a helical segment. His-275 provides a ligand contact to heme b. At 293 to 311 (GTRSKVNAKEAELTSKQTK) the chain is on the cytoplasmic side.

It belongs to the COX15/CtaA family. Type 1 subfamily. In terms of assembly, interacts with CtaB. Heme b is required as a cofactor.

It is found in the cell membrane. The catalysed reaction is Fe(II)-heme o + 2 A + H2O = Fe(II)-heme a + 2 AH2. It participates in porphyrin-containing compound metabolism; heme A biosynthesis; heme A from heme O: step 1/1. Catalyzes the conversion of heme O to heme A by two successive hydroxylations of the methyl group at C8. The first hydroxylation forms heme I, the second hydroxylation results in an unstable dihydroxymethyl group, which spontaneously dehydrates, resulting in the formyl group of heme A. This Bacillus cereus (strain ATCC 14579 / DSM 31 / CCUG 7414 / JCM 2152 / NBRC 15305 / NCIMB 9373 / NCTC 2599 / NRRL B-3711) protein is Heme A synthase.